Consider the following 522-residue polypeptide: 3'3'-cGAMP-specific phosphodiesterase 2 (522 aa).

The 125-residue stretch at 36–160 (CVLLVDDDEQ…QKLRTLLYSM (125 aa)) folds into the Response regulatory domain. Aspartate 91 carries the 4-aspartylphosphate modification. Residues 325 to 522 (LRETSKELVY…FIAIRASLPD (198 aa)) form the HD-GYP domain. Residues histidine 382 and aspartate 383 each contribute to the a divalent metal cation site. The active-site Proton donor is the lysine 386. A divalent metal cation contacts are provided by histidine 411, histidine 437, histidine 438, and aspartate 466.

As to quaternary structure, homodimer. Mn(2+) is required as a cofactor.

It carries out the reaction 3',3'-cGAMP + H2O = 5'-pApG-3' + H(+). In terms of biological role, phosphodiesterase (PDE) that catalyzes the hydrolysis of 3'3'-cyclic GMP-AMP (3'3'-cGAMP), leading to linear 5'-pApG. Counteracts the function of the 3'3'-cGAMP synthase DncV, and is involved in the modulation of intracellular 3'3'-cGAMP levels. Enhances bacterial chemotaxis and inhibits intestinal colonization in vivo. Thus exerts a crucial role in regulating bacterial infectivity through catalyzing 3'3'-cGAMP degradation. Is specific for 3'3'-cGAMP since it cannot degrade other cGAMP linkage isomers (3'2'-, 2'3'-, and 2'2'-cGAMPs). Is also able to hydrolyze c-di-GMP but not c-di-AMP. The chain is 3'3'-cGAMP-specific phosphodiesterase 2 from Vibrio cholerae serotype O1 (strain ATCC 39315 / El Tor Inaba N16961).